The primary structure comprises 203 residues: MSQREGSLEDHQTDSSISFLPHLEAKIRQTHNLARLLTKYAEQLLEEYVQQQGEPFGLPGFSPPRLPLAGLSGPAPSHAGLPVSERLRQDAAALSVLPALLDAVRRRQAELNPRAPRLLRSLEDAARQVRALGAAVETVLAALGAAARGPGPEPVTVATLFTANSTAGIFSAKVLGFHVCGLYGEWVSRTEGDLGQLVPGGVA.

Belongs to the IL-6 superfamily. Highly expressed in heart, skeletal muscle, liver, lung and kidney. Lower levels in testis and brain. No expression in spleen.

It localises to the secreted. In terms of biological role, induces cardiac myocyte hypertrophy in vitro. Binds to and activates the ILST/gp130 receptor. This Mus musculus (Mouse) protein is Cardiotrophin-1 (Ctf1).